Consider the following 863-residue polypeptide: Bifunctional uridylyltransferase/uridylyl-removing enzyme (863 aa).

The tract at residues 1–328 is uridylyltransferase; sequence MLFPLSLSSP…SSNQATVIEQ (328 aa). The uridylyl-removing stretch occupies residues 329-687; that stretch reads LDDDFQLINQ…ISNRFSLGGT (359 aa). One can recognise an HD domain in the interval 446 to 568; the sequence is VDEHTLRVML…VQNQVRLDYL (123 aa). 2 ACT domains span residues 688-772 and 794-863; these read EVFI…PNRQ and EMEL…RNIG.

It belongs to the GlnD family. Requires Mg(2+) as cofactor.

The catalysed reaction is [protein-PII]-L-tyrosine + UTP = [protein-PII]-uridylyl-L-tyrosine + diphosphate. The enzyme catalyses [protein-PII]-uridylyl-L-tyrosine + H2O = [protein-PII]-L-tyrosine + UMP + H(+). Uridylyltransferase (UTase) activity is inhibited by glutamine, while glutamine activates uridylyl-removing (UR) activity. Functionally, modifies, by uridylylation and deuridylylation, the PII regulatory proteins (GlnB and homologs), in response to the nitrogen status of the cell that GlnD senses through the glutamine level. Under low glutamine levels, catalyzes the conversion of the PII proteins and UTP to PII-UMP and PPi, while under higher glutamine levels, GlnD hydrolyzes PII-UMP to PII and UMP (deuridylylation). Thus, controls uridylylation state and activity of the PII proteins, and plays an important role in the regulation of nitrogen assimilation and metabolism. The protein is Bifunctional uridylyltransferase/uridylyl-removing enzyme of Haemophilus influenzae (strain PittEE).